The following is an 85-amino-acid chain: Dr hemagglutinin AFA-III operon regulatory protein AfaF (85 aa).

This sequence to E.coli PapI and DaaF.

May have a possible regulatory function on the expression of the other AFA-III genes. The sequence is that of Dr hemagglutinin AFA-III operon regulatory protein AfaF (afaF) from Escherichia coli.